The primary structure comprises 198 residues: Nucleoid occlusion factor SlmA (198 aa).

Positions 10–70 constitute an HTH tetR-type domain; it reads NRREEILQSL…SLIEFIEDSL (61 aa). A DNA-binding region (H-T-H motif) is located at residues 33–52; it reads TTAKLAASVGVSEAALYRHF. Positions 117–144 form a coiled coil; it reads EQDRLQGRINQLFERIEAQLRQVLREKR.

Belongs to the nucleoid occlusion factor SlmA family. In terms of assembly, homodimer. Interacts with FtsZ.

The protein resides in the cytoplasm. It is found in the nucleoid. In terms of biological role, required for nucleoid occlusion (NO) phenomenon, which prevents Z-ring formation and cell division over the nucleoid. Acts as a DNA-associated cell division inhibitor that binds simultaneously chromosomal DNA and FtsZ, and disrupts the assembly of FtsZ polymers. SlmA-DNA-binding sequences (SBS) are dispersed on non-Ter regions of the chromosome, preventing FtsZ polymerization at these regions. The polypeptide is Nucleoid occlusion factor SlmA (Escherichia coli O127:H6 (strain E2348/69 / EPEC)).